A 433-amino-acid chain; its full sequence is MKAIRVGLLGLGTVGSGVVKIIQDHQDKLMHQVGCPVTIKKVLVKDLEKKREVDLPKEVLTTEVYDVIDDPDVDVVIEVIGGVEQTKQYLVDALRSKKHVVTANKDLMAVYGSELLAEAKENGCDIYFEASVAGGIPILRTLEEGLSSDRITKMMGIVNGTTNFILTKMIKEKSPYEEVLKEAQDLGFAEADPTSDVEGLDAARKMAILARLGFSMNVDLEDVKVKGISQITDEDISFSKRLGYTMKLIGIAQRDGSKIEVSVQPTLLPDHHPLSAVHNEFNAVYVYGEAVGETMFYGPGAGSMPTATSVVSDLVAVMKNMRLGVTGNSFVGPQYEKNMKSPSDIYAQQFLRIHVKDEVGSFSKITSVFSERGVSFEKILQLPIKGHDELAEIVIVTHHTSEADFSDILQNLNDLEVVQEVKSTYRVEGNGWS.

NADPH is bound by residues T13 and V14. NAD(+) is bound by residues V14 and V33. V14 contributes to the NADP(+) binding site. NADPH-binding residues include K45 and K105. The NADP(+) site is built by K45 and K105. Na(+) is bound by residues E129, V132, G134, and I136. NADP(+) contacts are provided by G187 and E190. L-homoserine-binding residues include E190 and D201. Catalysis depends on K205, which acts as the Proton donor. NADPH is bound at residue G302. G302 serves as a coordination point for NAD(+). G302 contacts NADP(+). Positions 350-426 (FLRIHVKDEV…VVQEVKSTYR (77 aa)) constitute an ACT domain.

This sequence belongs to the homoserine dehydrogenase family. Homotetramer. Requires a metal cation as cofactor.

The protein resides in the cytoplasm. The protein localises to the secreted. The enzyme catalyses L-homoserine + NADP(+) = L-aspartate 4-semialdehyde + NADPH + H(+). Its pathway is amino-acid biosynthesis; L-methionine biosynthesis via de novo pathway; L-homoserine from L-aspartate: step 3/3. The protein operates within amino-acid biosynthesis; L-threonine biosynthesis; L-threonine from L-aspartate: step 3/5. Feedback inhibition by threonine. Activated by sodium ions. Its function is as follows. Catalyzes the conversion of L-aspartate-beta-semialdehyde (L-Asa) to L-homoserine (L-Hse), the third step in the biosynthesis of threonine and methionine from aspartate. Utilizes NADPH but not NADH as coenzyme. This Bacillus subtilis (strain 168) protein is Homoserine dehydrogenase (hom).